Consider the following 417-residue polypeptide: Serine protease hepsin (417 aa).

Over Met-1–Ala-23 the chain is Cytoplasmic. Residues Gly-24–Leu-44 form a helical; Signal-anchor for type II membrane protein membrane-spanning segment. The Extracellular segment spans residues Arg-45–Leu-417. The 98-residue stretch at Val-54–Gln-151 folds into the SRCR domain. Disulfide bonds link Cys-77/Cys-140, Cys-90/Cys-150, Cys-119/Cys-138, Cys-153/Cys-277, Cys-188/Cys-204, Cys-291/Cys-359, Cys-322/Cys-338, and Cys-349/Cys-381. N-linked (GlcNAc...) asparagine glycosylation is present at Asn-112. Residues Ile-163–Lys-405 enclose the Peptidase S1 domain. Catalysis depends on charge relay system residues His-203 and Asp-257. Ser-353 functions as the Charge relay system in the catalytic mechanism.

The protein belongs to the peptidase S1 family.

It localises to the membrane. It carries out the reaction Cleavage after basic amino-acid residues, with Arg strongly preferred to Lys.. Plays an essential role in cell growth and maintenance of cell morphology. May mediate the activating cleavage of HGF and MST1/HGFL. Plays a role in the proteolytic processing of ACE2. This is Serine protease hepsin (HPN) from Pongo abelii (Sumatran orangutan).